The chain runs to 148 residues: Endoribonuclease YbeY (148 aa).

Positions 102, 106, and 112 each coordinate Zn(2+).

The protein belongs to the endoribonuclease YbeY family. Requires Zn(2+) as cofactor.

It is found in the cytoplasm. Functionally, single strand-specific metallo-endoribonuclease involved in late-stage 70S ribosome quality control and in maturation of the 3' terminus of the 16S rRNA. This is Endoribonuclease YbeY from Phytoplasma mali (strain AT).